The chain runs to 203 residues: N-(5'-phosphoribosyl)anthranilate isomerase (203 aa).

The protein belongs to the TrpF family.

The enzyme catalyses N-(5-phospho-beta-D-ribosyl)anthranilate = 1-(2-carboxyphenylamino)-1-deoxy-D-ribulose 5-phosphate. Its pathway is amino-acid biosynthesis; L-tryptophan biosynthesis; L-tryptophan from chorismate: step 3/5. In Geobacter sulfurreducens (strain ATCC 51573 / DSM 12127 / PCA), this protein is N-(5'-phosphoribosyl)anthranilate isomerase.